A 298-amino-acid polypeptide reads, in one-letter code: Inosose dehydratase (298 aa).

This sequence belongs to the IolE/MocC family. Glutathione is required as a cofactor. It depends on Co(2+) as a cofactor. Requires Mn(2+) as cofactor.

The enzyme catalyses scyllo-inosose = 3D-3,5/4-trihydroxycyclohexane-1,2-dione + H2O. Its pathway is polyol metabolism; myo-inositol degradation into acetyl-CoA; acetyl-CoA from myo-inositol: step 2/7. Catalyzes the dehydration of inosose (2-keto-myo-inositol, 2KMI or 2,4,6/3,5-pentahydroxycyclohexanone) to 3D-(3,5/4)-trihydroxycyclohexane-1,2-dione (D-2,3-diketo-4-deoxy-epi-inositol). The sequence is that of Inosose dehydratase from Clostridium botulinum (strain Eklund 17B / Type B).